The sequence spans 43 residues: Seed non-specific lipid transfer protein-like (43 aa).

It belongs to the plant LTP family. Homodimer.

In terms of biological role, plant non-specific lipid-transfer proteins transfer phospholipids as well as galactolipids across membranes. May play a role in wax or cutin deposition in the cell walls of expanding epidermal cells and certain secretory tissues. This isoform inhibits the hyphal growth of several fungi in vitro. In Raphanus sativus (Radish), this protein is Seed non-specific lipid transfer protein-like.